The sequence spans 283 residues: Putative pyruvate, phosphate dikinase regulatory protein (283 aa).

Residue 154–161 (GVSRTSKT) coordinates ADP.

It belongs to the pyruvate, phosphate/water dikinase regulatory protein family. PDRP subfamily.

It catalyses the reaction N(tele)-phospho-L-histidyl/L-threonyl-[pyruvate, phosphate dikinase] + ADP = N(tele)-phospho-L-histidyl/O-phospho-L-threonyl-[pyruvate, phosphate dikinase] + AMP + H(+). The enzyme catalyses N(tele)-phospho-L-histidyl/O-phospho-L-threonyl-[pyruvate, phosphate dikinase] + phosphate + H(+) = N(tele)-phospho-L-histidyl/L-threonyl-[pyruvate, phosphate dikinase] + diphosphate. Functionally, bifunctional serine/threonine kinase and phosphorylase involved in the regulation of the pyruvate, phosphate dikinase (PPDK) by catalyzing its phosphorylation/dephosphorylation. This Afipia carboxidovorans (strain ATCC 49405 / DSM 1227 / KCTC 32145 / OM5) (Oligotropha carboxidovorans) protein is Putative pyruvate, phosphate dikinase regulatory protein.